The sequence spans 489 residues: Rhamnulokinase (489 aa).

13-17 (ASSGR) is a binding site for ATP. Cysteine 68 and cysteine 222 are oxidised to a cystine. Residues glycine 83 and 236–238 (HDT) each bind substrate. The Proton acceptor role is filled by aspartate 237. Threonine 259 lines the ATP pocket. Position 296 (asparagine 296) interacts with substrate. Glutamine 304 provides a ligand contact to ATP. Cysteine 353 and cysteine 370 are disulfide-bonded. ATP is bound at residue glycine 402. Cysteine 413 and cysteine 417 are joined by a disulfide.

This sequence belongs to the rhamnulokinase family. In terms of assembly, monomer. The cofactor is Mg(2+).

It carries out the reaction L-rhamnulose + ATP = L-rhamnulose 1-phosphate + ADP + H(+). The protein operates within carbohydrate degradation; L-rhamnose degradation; glycerone phosphate from L-rhamnose: step 2/3. Its function is as follows. Involved in the catabolism of L-rhamnose (6-deoxy-L-mannose). Catalyzes the transfer of the gamma-phosphate group from ATP to the 1-hydroxyl group of L-rhamnulose to yield L-rhamnulose 1-phosphate. In Escherichia coli (strain 55989 / EAEC), this protein is Rhamnulokinase.